The chain runs to 570 residues: MGKGSKQITHSEWASGDSYSASAGAGGGKGGDNAPFKRLPFNFCSLSLQPFAHPVCTPSGTIFDLTNILPWIKKHGKNPVDGTPLKNSDLIKLNIAKNESGDYVDPVTYKVLTDNTHIVALRNTGNVFAWDTVERLNIKGKLWRDLVTDEEFGRKDIITLQDPQNIESRNLSSFNYLKEGESVPGQKEEESNVNASALGSSAKILKAKEAVAKARSERAQRADSSAVTKKADGSTTTSTQSKTASFQSGKPTPYNAAKYTTGMAAASFTSTGLTPHTSAELALLSDEEYMLKRGRVKQKGYARISTTSGDINLELQTEYAPKAVWNFIKLAKKGYYKDVTFHRNIKGFMIQGGDPSGTGRGGESIWGKYFNDEFEGPLKHDSRGTLSMANKGKNTNSSQFFIAYRALPHLNNKHTIFGHVIDDPTPSSTTLNNLETHPVNSSTNRPTPDIRITDVTIFVDPFEEFLNQKKAEEASGKNKKVDPTEEDRETQQEDDDQVTWTGKRVRGPGSTAAGGDAGSGVGKYLKAALANQTTQEEDEIVEFVDEEPEPEPMRKKFKSRGGFGDFSSWD.

One can recognise a U-box domain in the interval 37–110 (KRLPFNFCSL…GDYVDPVTYK (74 aa)). Disordered regions lie at residues 215-253 (RSER…KPTP), 428-449 (STTL…PTPD), and 469-570 (KKAE…SSWD). Low complexity predominate over residues 234 to 248 (STTTSTQSKTASFQS). A PPIase cyclophilin-type domain is found at 298–457 (QKGYARISTT…PDIRITDVTI (160 aa)). Residues 428 to 446 (STTLNNLETHPVNSSTNRP) are compositionally biased toward polar residues. Positions 469 to 483 (KKAEEASGKNKKVDP) are enriched in basic and acidic residues. 2 stretches are compositionally biased toward acidic residues: residues 484-497 (TEED…DDDQ) and 535-550 (QEED…EPEP).

Belongs to the cyclophilin-type PPIase family. PPIL2 subfamily.

It is found in the nucleus. It carries out the reaction [protein]-peptidylproline (omega=180) = [protein]-peptidylproline (omega=0). The catalysed reaction is S-ubiquitinyl-[E2 ubiquitin-conjugating enzyme]-L-cysteine + [acceptor protein]-L-lysine = [E2 ubiquitin-conjugating enzyme]-L-cysteine + N(6)-ubiquitinyl-[acceptor protein]-L-lysine.. Functionally, may catalyze the cis-trans isomerization of proline imidic peptide bonds in oligopeptides thereby assisting the folding of proteins. May also function as a chaperone, playing a role in intracellular transport of proteins. May also have a protein ubiquitin ligase activity acting as an E3 ubiquitin protein ligase or as a ubiquitin-ubiquitin ligase promoting elongation of ubiquitin chains on proteins. The chain is Peptidyl-prolyl cis-trans isomerase-like 2 (cyp8) from Aspergillus oryzae (strain ATCC 42149 / RIB 40) (Yellow koji mold).